The primary structure comprises 285 residues: DegV domain-containing protein CA_C3284 (285 aa).

The DegV domain maps to 3–280 (VKILTDSTSC…PGAIGIAYYT (278 aa)). Positions 59 and 91 each coordinate hexadecanoate.

In terms of biological role, may bind long-chain fatty acids, such as palmitate, and may play a role in lipid transport or fatty acid metabolism. This is DegV domain-containing protein CA_C3284 from Clostridium acetobutylicum (strain ATCC 824 / DSM 792 / JCM 1419 / IAM 19013 / LMG 5710 / NBRC 13948 / NRRL B-527 / VKM B-1787 / 2291 / W).